Here is a 74-residue protein sequence, read N- to C-terminus: Translation initiation factor IF-1 (74 aa).

Residues 1–72 form the S1-like domain; that stretch reads MADTEKLKML…TRGRITYRHR (72 aa).

It belongs to the IF-1 family. In terms of assembly, component of the 30S ribosomal translation pre-initiation complex which assembles on the 30S ribosome in the order IF-2 and IF-3, IF-1 and N-formylmethionyl-tRNA(fMet); mRNA recruitment can occur at any time during PIC assembly.

It localises to the cytoplasm. Its function is as follows. One of the essential components for the initiation of protein synthesis. Stabilizes the binding of IF-2 and IF-3 on the 30S subunit to which N-formylmethionyl-tRNA(fMet) subsequently binds. Helps modulate mRNA selection, yielding the 30S pre-initiation complex (PIC). Upon addition of the 50S ribosomal subunit IF-1, IF-2 and IF-3 are released leaving the mature 70S translation initiation complex. The chain is Translation initiation factor IF-1 from Ureaplasma parvum serovar 3 (strain ATCC 700970).